The primary structure comprises 663 residues: DNA ligase (663 aa).

Residues 33–37 (DYSYD), 82–83 (SI), and Glu112 each bind NAD(+). Lys114 serves as the catalytic N6-AMP-lysine intermediate. Residues Arg135, Glu171, Lys285, and Lys309 each coordinate NAD(+). Zn(2+)-binding residues include Cys403, Cys406, Cys419, and Cys424. One can recognise a BRCT domain in the interval 581 to 663 (DKEAPLQGKV…SRILDAKSVS (83 aa)).

Belongs to the NAD-dependent DNA ligase family. LigA subfamily. Mg(2+) serves as cofactor. The cofactor is Mn(2+).

The enzyme catalyses NAD(+) + (deoxyribonucleotide)n-3'-hydroxyl + 5'-phospho-(deoxyribonucleotide)m = (deoxyribonucleotide)n+m + AMP + beta-nicotinamide D-nucleotide.. In terms of biological role, DNA ligase that catalyzes the formation of phosphodiester linkages between 5'-phosphoryl and 3'-hydroxyl groups in double-stranded DNA using NAD as a coenzyme and as the energy source for the reaction. It is essential for DNA replication and repair of damaged DNA. The polypeptide is DNA ligase (Chlamydia trachomatis serovar L2 (strain ATCC VR-902B / DSM 19102 / 434/Bu)).